The chain runs to 228 residues: L-ribulose-5-phosphate 4-epimerase UlaF (228 aa).

Residues 26–27 (GN), 43–44 (SG), and 72–73 (SS) each bind substrate. Zn(2+) is bound by residues D74, H93, and H95. Catalysis depends on D118, which acts as the Proton donor/acceptor. H167 contributes to the Zn(2+) binding site. Y225 (proton donor/acceptor) is an active-site residue.

It belongs to the aldolase class II family. AraD/FucA subfamily. Zn(2+) serves as cofactor.

The enzyme catalyses L-ribulose 5-phosphate = D-xylulose 5-phosphate. Its pathway is cofactor degradation; L-ascorbate degradation; D-xylulose 5-phosphate from L-ascorbate: step 4/4. In terms of biological role, catalyzes the isomerization of L-ribulose 5-phosphate to D-xylulose 5-phosphate. Is involved in the anaerobic L-ascorbate utilization. The sequence is that of L-ribulose-5-phosphate 4-epimerase UlaF from Escherichia coli (strain K12 / MC4100 / BW2952).